Consider the following 209-residue polypeptide: Na(+)-translocating NADH-quinone reductase subunit D (209 aa).

A run of 5 helical transmembrane segments spans residues 42 to 62, 70 to 90, 103 to 123, 131 to 151, and 178 to 198; these read LVMT…ISLI, VRII…DQIL, VFVG…AYAM, FMDG…VGFV, and NGLF…IWGL.

It belongs to the NqrDE/RnfAE family. Composed of six subunits; NqrA, NqrB, NqrC, NqrD, NqrE and NqrF.

The protein resides in the cell inner membrane. It catalyses the reaction a ubiquinone + n Na(+)(in) + NADH + H(+) = a ubiquinol + n Na(+)(out) + NAD(+). Its function is as follows. NQR complex catalyzes the reduction of ubiquinone-1 to ubiquinol by two successive reactions, coupled with the transport of Na(+) ions from the cytoplasm to the periplasm. NqrA to NqrE are probably involved in the second step, the conversion of ubisemiquinone to ubiquinol. This Yersinia enterocolitica serotype O:8 / biotype 1B (strain NCTC 13174 / 8081) protein is Na(+)-translocating NADH-quinone reductase subunit D.